Here is a 397-residue protein sequence, read N- to C-terminus: Acetate kinase 1 (397 aa).

Asn8 lines the Mg(2+) pocket. Lys15 is an ATP binding site. Residue Arg89 coordinates substrate. Catalysis depends on Asp146, which acts as the Proton donor/acceptor. ATP-binding positions include His206–Gly210, Asp281–Arg283, and Gly329–Asn333. Glu382 lines the Mg(2+) pocket.

Belongs to the acetokinase family. In terms of assembly, homodimer. Mg(2+) is required as a cofactor. It depends on Mn(2+) as a cofactor.

It localises to the cytoplasm. It catalyses the reaction acetate + ATP = acetyl phosphate + ADP. Its pathway is metabolic intermediate biosynthesis; acetyl-CoA biosynthesis; acetyl-CoA from acetate: step 1/2. In terms of biological role, catalyzes the formation of acetyl phosphate from acetate and ATP. Can also catalyze the reverse reaction. The sequence is that of Acetate kinase 1 from Listeria monocytogenes serovar 1/2a (strain ATCC BAA-679 / EGD-e).